Consider the following 333-residue polypeptide: MWSCGPLNSTAWAEEPLCRNLRLGLWVLSLLYLGAGVPVSLGYNALLVLANLASKNTMTMPDVYFVNMAVAGLVLTALAPAYLLGPAHSRWALWSLSSEAHVTLLILFNVASLVTMYSTALLSLDYYIERALPRTYMASVYNTRHVCGFVWGGAVLTSFSSLLFYICSHVSSRIAECARMQNTEAADAILVLIGYVVPGLAVLYALALISRIGKEDTPLDQDTSRLDPSVHRLLVATVCTQFGLWTPYYLSLGHTVLTSRGRTVEGHYLGILQVAKDLAKFLAFSSSSVTPLLYRYINKAFPGKLRRLMKKMHCGRRHCSPDPSGIQQVMAQA.

The Extracellular portion of the chain corresponds to 1–22 (MWSCGPLNSTAWAEEPLCRNLR). Residue Asn-8 is glycosylated (N-linked (GlcNAc...) asparagine). Residues 23 to 43 (LGLWVLSLLYLGAGVPVSLGY) traverse the membrane as a helical segment. Topologically, residues 44 to 64 (NALLVLANLASKNTMTMPDVY) are cytoplasmic. Residues 65-85 (FVNMAVAGLVLTALAPAYLLG) form a helical membrane-spanning segment. At 86–101 (PAHSRWALWSLSSEAH) the chain is on the extracellular side. Residues 102 to 122 (VTLLILFNVASLVTMYSTALL) traverse the membrane as a helical segment. The Cytoplasmic segment spans residues 123–145 (SLDYYIERALPRTYMASVYNTRH). Residues 146–166 (VCGFVWGGAVLTSFSSLLFYI) form a helical membrane-spanning segment. Residues 167 to 188 (CSHVSSRIAECARMQNTEAADA) lie on the Extracellular side of the membrane. The helical transmembrane segment at 189-209 (ILVLIGYVVPGLAVLYALALI) threads the bilayer. At 210–232 (SRIGKEDTPLDQDTSRLDPSVHR) the chain is on the cytoplasmic side. Residues 233–253 (LLVATVCTQFGLWTPYYLSLG) form a helical membrane-spanning segment. At 254-277 (HTVLTSRGRTVEGHYLGILQVAKD) the chain is on the extracellular side. The helical transmembrane segment at 278 to 298 (LAKFLAFSSSSVTPLLYRYIN) threads the bilayer. The Cytoplasmic portion of the chain corresponds to 299-333 (KAFPGKLRRLMKKMHCGRRHCSPDPSGIQQVMAQA).

Belongs to the G-protein coupled receptor 1 family.

The protein localises to the cell membrane. Its function is as follows. GPCR receptor required for the regulation of plasma cholesterol levels. Receptor for CHLSN, a gut derived hormone which mediates an inhibitory effect of intestinal cholesterol absorption on hepatic cholesterol synthesis. Cholesin-binding exerts an antagonistic effect by inhibiting PKA signaling and suppressing SREBF2-controlled cholesterol in the liver. The chain is G-protein coupled receptor 146 (Gpr146) from Mus musculus (Mouse).